The chain runs to 362 residues: Trans-enoyl reductase phm4 (362 aa).

50 to 53 (VDAK) contributes to the NADP(+) binding site. Residue 136 to 143 (TCFMTCGL) participates in substrate binding. NADP(+) contacts are provided by residues 171-174 (ATAT), 194-197 (SPHS), Tyr-212, and 259-260 (LD). 280-284 (GPIML) lines the substrate pocket. 349-350 (VN) serves as a coordination point for NADP(+).

Belongs to the zinc-containing alcohol dehydrogenase family. Monomer.

It participates in secondary metabolite biosynthesis. Trans-enoyl reductase; part of the gene cluster that mediates the biosynthesis of the trans-fused decalin-containing tetramic acid phomasetin, the stereochemical opposite of the HIV-1 integrase inhibitor equisetin. The PKS module of phm1 together with the enoylreductase phm4 catalyze the formation of the polyketide unit which is then conjugated to L-serine by the condensation domain of the phm1 NRPS module. Activity of the Dieckmann cyclase domain (RED) of phm1 results in release of the Dieckmann product intermediate. The Diels-Alderase phm7 then uses the Dieckmann product of phm1 as substrate and catalyzes the Diels-Alder cycloaddition to form the decalin ring of N-desmethylphomasetin. N-desmethylphomasetin is further methylated to phomasetin by the methyltransferase phm5. This chain is Trans-enoyl reductase phm4, found in Pyrenochaetopsis sp.